A 407-amino-acid chain; its full sequence is Peptidase T (407 aa).

H78 serves as a coordination point for Zn(2+). D80 is an active-site residue. A Zn(2+)-binding site is contributed by D139. The active-site Proton acceptor is the E173. Zn(2+) is bound by residues E174, D196, and H378.

This sequence belongs to the peptidase M20B family. It depends on Zn(2+) as a cofactor.

It is found in the cytoplasm. It carries out the reaction Release of the N-terminal residue from a tripeptide.. Its function is as follows. Cleaves the N-terminal amino acid of tripeptides. This Shewanella pealeana (strain ATCC 700345 / ANG-SQ1) protein is Peptidase T.